The chain runs to 299 residues: Nicotinate-nucleotide pyrophosphorylase [carboxylating] (299 aa).

The important for hexamer formation stretch occupies residues 8–12 (LLLPP). Residues Arg-102, 138-139 (RK), 160-161 (HR), Lys-171, Glu-201, Asp-222, 248-250 (SGG), and Gly-270 contribute to the quinolinate site.

This sequence belongs to the NadC/ModD family. As to quaternary structure, hexamer formed by 3 homodimers.

It carries out the reaction nicotinate beta-D-ribonucleotide + CO2 + diphosphate = quinolinate + 5-phospho-alpha-D-ribose 1-diphosphate + 2 H(+). Its pathway is cofactor biosynthesis; NAD(+) biosynthesis; nicotinate D-ribonucleotide from quinolinate: step 1/1. Its function is as follows. Involved in the catabolism of quinolinic acid (QA). This chain is Nicotinate-nucleotide pyrophosphorylase [carboxylating], found in Sus scrofa (Pig).